The following is a 165-amino-acid chain: Myosin regulatory light chain 2A, cardiac muscle isoform (165 aa).

N,N,N-trimethylalanine is present on Ala-2. EF-hand domains lie at 24-59, 94-128, and 129-164; these read AQIQ…LGRL, DPEE…QEGR, and FSQE…GEEK. Asp-37, Asn-39, Asp-41, and Asp-48 together coordinate Ca(2+).

In terms of assembly, myosin is a hexamer of 2 heavy chains and 4 light chains. In terms of processing, the N-terminus is blocked. N,N,N-trimethylalanine, found in other myosin light chains would not have been detected in the N-terminal tryptic peptide in PubMed:7319048 because it would remain trimethylated and ninhydrin negative after hydrolysis.

This is Myosin regulatory light chain 2A, cardiac muscle isoform from Gallus gallus (Chicken).